The primary structure comprises 551 residues: Hedycaryol synthase TPS20CT (551 aa).

(2E,6E)-farnesyl diphosphate-binding residues include R266, D303, D307, R444, and D447. Mg(2+)-binding residues include D303 and D307. Residues D303 to D307 carry the DDXXD motif motif. Mg(2+)-binding residues include D447, S451, and E455.

It belongs to the terpene synthase family. Tpsb subfamily. It depends on Mg(2+) as a cofactor. Requires Mn(2+) as cofactor. In terms of tissue distribution, highly expressed in glandular trichomes.

It carries out the reaction (2E,6E)-farnesyl diphosphate + H2O = (2E,6E)-hedycaryol + diphosphate. It participates in secondary metabolite biosynthesis; terpenoid biosynthesis. Functionally, involved in sesquiterpene olefins biosynthesis, constituants of cannabinoids and terpenoids-rich resins. Catalyzes primarily the conversion of (2E)-farnesyl diphosphate to hedycaryol, which is spontaneously converted to elemol as a thermal degradation product. In Cannabis sativa (Hemp), this protein is Hedycaryol synthase TPS20CT.